The chain runs to 296 residues: Urease accessory protein UreD (296 aa).

It belongs to the UreD family. In terms of assembly, ureD, UreF and UreG form a complex that acts as a GTP-hydrolysis-dependent molecular chaperone, activating the urease apoprotein by helping to assemble the nickel containing metallocenter of UreC. The UreE protein probably delivers the nickel.

The protein localises to the cytoplasm. In terms of biological role, required for maturation of urease via the functional incorporation of the urease nickel metallocenter. This chain is Urease accessory protein UreD, found in Nitrosococcus oceani (strain ATCC 19707 / BCRC 17464 / JCM 30415 / NCIMB 11848 / C-107).